The primary structure comprises 345 residues: UDP-3-O-acylglucosamine N-acyltransferase 3 (345 aa).

H236 (proton acceptor) is an active-site residue.

It belongs to the transferase hexapeptide repeat family. LpxD subfamily. Homotrimer.

It carries out the reaction a UDP-3-O-[(3R)-3-hydroxyacyl]-alpha-D-glucosamine + a (3R)-hydroxyacyl-[ACP] = a UDP-2-N,3-O-bis[(3R)-3-hydroxyacyl]-alpha-D-glucosamine + holo-[ACP] + H(+). It functions in the pathway bacterial outer membrane biogenesis; LPS lipid A biosynthesis. Catalyzes the N-acylation of UDP-3-O-acylglucosamine using 3-hydroxyacyl-ACP as the acyl donor. Is involved in the biosynthesis of lipid A, a phosphorylated glycolipid that anchors the lipopolysaccharide to the outer membrane of the cell. This is UDP-3-O-acylglucosamine N-acyltransferase 3 from Gloeobacter violaceus (strain ATCC 29082 / PCC 7421).